The following is a 1021-amino-acid chain: PDZ domain-containing protein 7 (1021 aa).

PDZ domains are found at residues 86–156 and 210–279; these read AVRV…LTSS and IVHL…EVLK. The span at 324 to 344 shows a compositional bias: low complexity; it reads SSSSVSSYASSAPCSSGSLPS. Disordered stretches follow at residues 324-345, 431-495, and 724-814; these read SSSSVSSYASSAPCSSGSLPSD, ITRS…DSRS, and RRGA…HRPR. Pro residues predominate over residues 729–744; it reads APPPQPPPVAPRPPRP. Over residues 758 to 767 the composition is skewed to polar residues; the sequence is QQNQSQTPAQ. Over residues 772 to 794 the composition is skewed to basic residues; that stretch reads SRSRSRSRSHSRGQGKSPGRRRS. The span at 799-808 shows a compositional bias: low complexity; sequence PIATAATANG. One can recognise a PDZ 3 domain in the interval 858–930; sequence TITLSKMKQS…QRAVDTIRRA (73 aa). The segment at 992–1021 is disordered; that stretch reads QLQQSLSSALKVPQSIPKLSPILKDPHDPS.

In terms of assembly, homodimerizes (via PDZ2 domain). Component of USH2 complex, composed of ADGRV1, PDZD7, USH2A and WHRN. Interacts (via PDZ domains) with WHRN; the interaction is direct. Interacts with USH1G. Interacts with ADGRV1 (via the cytoplasmic region). Interacts with USH2A (via the cytoplasmic region). Interacts with MYO7A (via MyTH4-FERM domains). Isoform 1 is expressed in developing and adult cochlea but not retina. Isoform 2 is expressed in developing and adult cochlea and retina. Isoform 3 is expressed in adult cochlea and retina. Isoform 4 is expressed in retina and developing cochlea but not adult cochlea. Isoform 5 is expressed in adult cochlea but not in developing cochlea or retina.

The protein resides in the cell projection. Its subcellular location is the cilium. The protein localises to the nucleus. It localises to the stereocilium. In terms of biological role, in cochlear developing hair cells, essential in organizing the USH2 complex at stereocilia ankle links. Blocks inhibition of adenylate cyclase activity mediated by ADGRV1. The polypeptide is PDZ domain-containing protein 7 (Mus musculus (Mouse)).